Consider the following 295-residue polypeptide: Protein transport protein SSO2 (295 aa).

Low complexity predominate over residues 1 to 18; the sequence is MSNPYQNSQNGYQQNNSY. The tract at residues 1–31 is disordered; it reads MSNPYQNSQNGYQQNNSYELNNYPNKQYSSS. Residues 1–270 are Cytoplasmic-facing; that stretch reads MSNPYQNSQN…SAKSARKKKL (270 aa). A compositionally biased stretch (polar residues) spans 19-31; it reads ELNNYPNKQYSSS. The stretch at 33 to 110 forms a coiled coil; the sequence is EDDFVQFMNE…NRIKNVQTQA (78 aa). Residues 196–258 form the t-SNARE coiled-coil homology domain; it reads LNEVQVRHRE…EQGVGHTNKA (63 aa). Residues 271–291 form a helical; Anchor for type IV membrane protein membrane-spanning segment; that stretch reads WCFFICLLIVIILAVILGAYF. At 292–295 the chain is on the extracellular side; the sequence is GTRK.

Belongs to the syntaxin family.

It is found in the membrane. In terms of biological role, late secretory t-SNARE protein required for secretion and proper cytokinesis. Plays an important role in the secretion of virulence-associated extracellular enzymes and vesicle-mediated polarized hyphal growth. This chain is Protein transport protein SSO2 (SSO2), found in Candida albicans (strain SC5314 / ATCC MYA-2876) (Yeast).